Here is a 358-residue protein sequence, read N- to C-terminus: Putative inhibitor of apoptosis (358 aa).

BIR repeat units follow at residues 4–70 (EKDR…CPFL) and 90–157 (YAAR…CEYL). C127, C130, H147, and C154 together coordinate Zn(2+). The region spanning 193–283 (EPPNDLSLIR…MLYKHLFVQQ (91 aa)) is the CARD domain. Residues 311-346 (CKVCMDKEVSIVFIPCGHLVVCKDCAPSLRKCPICR) form an RING-type zinc finger.

Belongs to the IAP family.

In Sus scrofa (Pig), this protein is Putative inhibitor of apoptosis (PIAP).